We begin with the raw amino-acid sequence, 397 residues long: Small ribosomal subunit protein mS29 (397 aa).

The transit peptide at 1–17 (MLKGMTRLVSRVHKLDP) directs the protein to the mitochondrion. Residues Lys-174 and Lys-206 each carry the N6-acetyllysine modification.

Belongs to the mitochondrion-specific ribosomal protein mS29 family. Component of the mitochondrial ribosome small subunit (28S) which comprises a 12S rRNA and about 30 distinct proteins. Interacts with DELE1. Interacts with NOA1.

Its subcellular location is the mitochondrion. It carries out the reaction GTP + H2O = GDP + phosphate + H(+). Its function is as follows. As a component of the mitochondrial small ribosomal subunit, it plays a role in the translation of mitochondrial mRNAs. Involved in mediating interferon-gamma-induced cell death. Displays GTPase activity in vitro. The polypeptide is Small ribosomal subunit protein mS29 (Bos taurus (Bovine)).